Here is a 178-residue protein sequence, read N- to C-terminus: Phosphopantetheine adenylyltransferase (178 aa).

Residue Ser-8 participates in substrate binding. Residues 8–9 and His-16 each bind ATP; that span reads SF. Substrate-binding residues include Lys-40, Thr-72, and Arg-86. Residues 87 to 89, Glu-97, and 122 to 128 each bind ATP; these read GLR and YSFLSSS.

Belongs to the bacterial CoaD family. Homohexamer. Mg(2+) serves as cofactor.

The protein localises to the cytoplasm. The catalysed reaction is (R)-4'-phosphopantetheine + ATP + H(+) = 3'-dephospho-CoA + diphosphate. It participates in cofactor biosynthesis; coenzyme A biosynthesis; CoA from (R)-pantothenate: step 4/5. In terms of biological role, reversibly transfers an adenylyl group from ATP to 4'-phosphopantetheine, yielding dephospho-CoA (dPCoA) and pyrophosphate. The chain is Phosphopantetheine adenylyltransferase from Picosynechococcus sp. (strain ATCC 27264 / PCC 7002 / PR-6) (Agmenellum quadruplicatum).